The primary structure comprises 210 residues: Large ribosomal subunit protein uL3 (210 aa).

Residues 126 to 167 (WGFQRGPSGHGSKNIREPGSTGNATFPGRVIKGKKMPGQKGN) are disordered. Basic residues predominate over residues 156 to 167 (IKGKKMPGQKGN).

The protein belongs to the universal ribosomal protein uL3 family. In terms of assembly, part of the 50S ribosomal subunit. Forms a cluster with proteins L14 and L19.

Functionally, one of the primary rRNA binding proteins, it binds directly near the 3'-end of the 23S rRNA, where it nucleates assembly of the 50S subunit. In Syntrophobacter fumaroxidans (strain DSM 10017 / MPOB), this protein is Large ribosomal subunit protein uL3.